The sequence spans 768 residues: Protein STRUBBELIG (768 aa).

Positions 1 to 24 (MSFTRWEVFFGLSVLALTMPFSAG) are cleaved as a signal peptide. The Extracellular segment spans residues 25 to 341 (VTNLRDVSAI…GSGKFWSTQR (317 aa)). The cysteines at positions 57 and 66 are disulfide-linked. Asn70 carries an N-linked (GlcNAc...) asparagine glycan. 6 LRR repeats span residues 94-115 (SIQVMDFSSNHISGTIPQALPS), 116-139 (SIRNLSLSSNRFTGNIPFTLSFLS), 140-162 (DLSELSLGSNLLSGEIPDYFQQL), 164-186 (KLTKLDLSSNILEGHLPSSMGDL), 188-210 (SLKILYLQDNKLTGTLDVIEDLF), and 211-231 (LTDLNVENNLFSGPIPPNLLK). An N-linked (GlcNAc...) asparagine glycan is attached at Asn119. The tract at residues 241-334 (PFNTSIITPP…ISPPSGSGSG (94 aa)) is disordered. Asn243 carries N-linked (GlcNAc...) asparagine glycosylation. 2 stretches are compositionally biased toward pro residues: residues 248 to 283 (TPPPPPVVDPPPATHRAPPVPRIPPVSGVPPAPFAP) and 291 to 301 (QHPPPSPPLVW). The segment covering 315–334 (NSVSGQPTLQISPPSGSGSG) has biased composition (polar residues). A helical membrane pass occupies residues 342 to 362 (IILVVSSVAIIVLVSGLCVTL). The Cytoplasmic segment spans residues 363–768 (WRCCRSKIYN…EIVQDLQHMI (406 aa)). Residues 385–477 (PYFNKPPSQP…RAAHFPPGLN (93 aa)) form a disordered region. Residues 439 to 464 (SYYNKDVNTPQKPLQQPPRQFQSNDT) show a composition bias toward polar residues. The region spanning 497–768 (FSEENIIGEG…EIVQDLQHMI (272 aa)) is the Protein kinase domain. Residues 503 to 511 (IGEGSIGNV) and Lys525 contribute to the ATP site.

The protein belongs to the protein kinase superfamily. Ser/Thr protein kinase family. As to quaternary structure, interacts (via intra-cellular domain) with AN; this interaction is not required for correct subcellular localization and recycling of SUB. Binds to QKY and POQ at the plasma membrane. Binds to QKY at plasmodesmata (PD) in root epidermal cells to promote tissue morphogenesis. Expressed in leaves, stems, inflorescences, flower buds and developing root epidermis.

Its subcellular location is the cell membrane. The protein resides in the cell junction. The protein localises to the plasmodesma. Regulated at the post-transcriptional level. Regulates the expression of transcription factors that define the cell fates. Acts in a non-cell-autonomous fashion, functions in a radial inside-out signaling process, and mediates cell morphogenesis and cell fate across clonally distinct cell layers in floral primordia, developing ovules, and root meristems. Seems to be required for the regulation of cell shape and the orientation of the mitotic division plane. Involved in root hair specification, in the formation of the outer integument and the shape of organs such as carpels and petals and is necessary for the shape and height of the stem. Non-functional SUB proteins are retained in the endoplasmic reticulum and degraded by endoplasmic reticulum-associated degradation (ERAD). Collaboratively with QKY and POQ, regulates cell growth anisotropy during gynoecium development, thus linking together cell-cell communication and cellular growth. Together with QKY, links RLK-dependent signal transduction and intercellular communication mediated by plasmodesmata (PD) to regulate tissue morphogenesis. The chain is Protein STRUBBELIG from Arabidopsis thaliana (Mouse-ear cress).